Reading from the N-terminus, the 215-residue chain is 3-isopropylmalate dehydratase small subunit (215 aa).

Belongs to the LeuD family. LeuD type 1 subfamily. As to quaternary structure, heterodimer of LeuC and LeuD.

It carries out the reaction (2R,3S)-3-isopropylmalate = (2S)-2-isopropylmalate. The protein operates within amino-acid biosynthesis; L-leucine biosynthesis; L-leucine from 3-methyl-2-oxobutanoate: step 2/4. In terms of biological role, catalyzes the isomerization between 2-isopropylmalate and 3-isopropylmalate, via the formation of 2-isopropylmaleate. This is 3-isopropylmalate dehydratase small subunit from Cellvibrio japonicus (strain Ueda107) (Pseudomonas fluorescens subsp. cellulosa).